A 279-amino-acid chain; its full sequence is Syntaxin-21 (279 aa).

Residues 1 to 34 form a disordered region; the sequence is MSFQDLEAGTRSPAPNRFTGGRQQRPSSRGDPSQ. Serine 2 bears the N-acetylserine mark. At 2–258 the chain is on the cytoplasmic side; it reads SFQDLEAGTR…AKTQRSNSSL (257 aa). A compositionally biased stretch (polar residues) spans 21–31; the sequence is GRQQRPSSRGD. A coiled-coil region spans residues 65–94; it reads ELRDKLQKTRLQISELVKNTSAKLKEASEA. The region spanning 186–248 is the t-SNARE coiled-coil homology domain; it reads EAIIEEREQG…TQATVQLRKA (63 aa). The helical; Anchor for type IV membrane protein transmembrane segment at 259–279 threads the bilayer; it reads TCLLILIFGIVLLIVIIVVLV.

It belongs to the syntaxin family. As to quaternary structure, interacts with VTI11 and SYP51 to form a t-SNARE complex and with alpha-SNAP to form a 20S complex. A high level expression is seen in the roots while a low level expression is seen in the leaves.

The protein resides in the prevacuolar compartment membrane. Functionally, may function in the docking or fusion of transport vesicles with the prevacuolar membrane. This is Syntaxin-21 (SYP21) from Arabidopsis thaliana (Mouse-ear cress).